We begin with the raw amino-acid sequence, 114 residues long: Small nuclear ribonucleoprotein SmD1a (114 aa).

The 73-residue stretch at 2 to 74 folds into the Sm domain; that stretch reads KLVRFLMKLN…IRYYILPDSL (73 aa). The interval 87–114 is disordered; sequence VKPKKPVAGKAVGRGRGRGRGRGRGRGR. 8 tandem repeats follow at residues 99 to 100, 101 to 102, 103 to 104, 105 to 106, 107 to 108, 109 to 110, 111 to 112, and 113 to 114. Residues 99–114 are 8 X 2 AA tandem repeats of G-R; the sequence is GRGRGRGRGRGRGRGR.

The protein belongs to the snRNP core protein family.

The protein resides in the nucleus. The protein localises to the nucleus speckle. Its subcellular location is the nucleolus. Involved in splicing regulation. Facilitates post-transcriptional gene silencing (PTGS) by limiting the degradation of transgene aberrant RNAs by the RNA quality control (RQC) machinery, thus favoring their entry into cytoplasmic siRNA bodies where they can trigger PTGS. Does not participate in the production of small RNAs. The polypeptide is Small nuclear ribonucleoprotein SmD1a (Arabidopsis thaliana (Mouse-ear cress)).